Reading from the N-terminus, the 308-residue chain is MDAVTTYEVFSAAQWAGLRAATPLPLTEGDLMVLRGLNERLSLDEVATIYLPLSRLLNLHVGAAQQLRRVKDTFLGRPVGRRPFVIGIAGSVAVGKSTTARVLQALLARWPDHPRVDLVTTDGFLYPNAVLASRAGLHRKGFPESYDLRRLVQFLADLEAGVEAIDVPVYSHATYDVVAGKAQTVRQPDIVILEGLNVLQGPERAAAIAVSDFFDLGIYVHADEADLERWYIERFLTLRATAFRDPSSYFHRYAAMGDDEARAFALQIWRTINGPNLTENILPTRARADVVLEKGPDHAVRAVHLRRL.

An ATP-binding site is contributed by 90-97 (GSVAVGKS).

This sequence belongs to the prokaryotic pantothenate kinase family.

It is found in the cytoplasm. The catalysed reaction is (R)-pantothenate + ATP = (R)-4'-phosphopantothenate + ADP + H(+). Its pathway is cofactor biosynthesis; coenzyme A biosynthesis; CoA from (R)-pantothenate: step 1/5. The protein is Pantothenate kinase of Sorangium cellulosum (strain So ce56) (Polyangium cellulosum (strain So ce56)).